Here is a 334-residue protein sequence, read N- to C-terminus: Heat-inducible transcription repressor HrcA (334 aa).

This sequence belongs to the HrcA family.

Its function is as follows. Negative regulator of class I heat shock genes (grpE-dnaK-dnaJ and groELS operons). Prevents heat-shock induction of these operons. This is Heat-inducible transcription repressor HrcA from Verminephrobacter eiseniae (strain EF01-2).